We begin with the raw amino-acid sequence, 1424 residues long: Serine/threonine-protein kinase LMTK3 (1424 aa).

The N-terminal stretch at 1 to 20 (MPAPGALILLAAVSASGCLA) is a signal peptide. The chain crosses the membrane as a helical span at residues 40-60 (AVVLISCSGLLAFIFLLLTCL). A disordered region spans residues 74–95 (NPEGEDCSGEYTPPAEETSSSQ). Residues 133–411 (LSYLQEIGSG…SDLQLQLTYL (279 aa)) enclose the Protein kinase domain. Residues 139–147 (IGSGWFGKV) and Lys164 contribute to the ATP site. Ser232 carries the phosphoserine modification. The active-site Proton acceptor is Asp266. Disordered stretches follow at residues 413–465 (SERP…PDDV) and 486–516 (RGAG…PFYE). The segment covering 418–439 (RPPPPPPPPRDGPFPWPWPPSH) has biased composition (pro residues). Arg490 is modified (omega-N-methylarginine). The segment covering 496-507 (PWQPASAPPAPH) has biased composition (pro residues). A phosphoserine mark is found at Ser531 and Ser535. 5 disordered regions span residues 544–666 (EHGS…PLPC), 680–964 (LERG…MSPE), 976–1024 (MSPK…APET), 1041–1313 (GLEM…RKRK), and 1325–1424 (LFDQ…PVEN). The span at 571 to 584 (QTPSEVPQLVSETW) shows a compositional bias: polar residues. A compositionally biased stretch (acidic residues) spans 638–647 (AEEEEEESSP). Residues 700 to 713 (PPEDDSSLRAERGS) show a composition bias toward basic and acidic residues. The segment covering 744 to 758 (RGPPPAPPPPPPPPR) has biased composition (pro residues). The segment covering 759–791 (ASAEPAASPDPPSALASPGSGLSSPGPKPGDSG) has biased composition (low complexity). Positions 818–841 (PRAPPEPPDPGAPRPPPDPGPLPL) are enriched in pro residues. A compositionally biased stretch (basic and acidic residues) spans 935 to 954 (DMKEKVAENGLESPEKEERA). Residues Ser947, Ser962, and Ser977 each carry the phosphoserine modification. The segment covering 994–1004 (RNTERPPEIGP) has biased composition (basic and acidic residues). Residues 1084 to 1094 (GSGGRALGGVG) show a composition bias toward gly residues. The span at 1095–1105 (TAPAGGPASAV) shows a compositional bias: low complexity. A compositionally biased stretch (basic and acidic residues) spans 1167–1177 (DPLKPERKGPE). Residues 1200–1213 (SRLSLALPPLTLTP) are compositionally biased toward low complexity. The span at 1231 to 1241 (AAGGEAGGAGA) shows a compositional bias: gly residues. Acidic residues predominate over residues 1245–1261 (AEEDGEDEDEDEEDEEA). Positions 1262-1272 (AGSRDPGRTRE) are enriched in basic and acidic residues. The segment covering 1329-1339 (ETPTNELSVQG) has biased composition (polar residues). Residues 1348 to 1360 (STPPAPPTPPHPT) show a composition bias toward pro residues.

The protein belongs to the protein kinase superfamily. Tyr protein kinase family. In terms of assembly, interacts with ESR1. Interacts with AP-2 complex subunit alpha. The cofactor is Mg(2+). In terms of processing, autophosphorylated. As to expression, expressed in brain. Predominantly expressed in cerebral cortex, thalamus, the cerebellum and hippocampal formation (at protein level).

The protein resides in the membrane. It localises to the cell projection. Its subcellular location is the axon. It is found in the dendrite. The protein localises to the golgi apparatus membrane. The enzyme catalyses L-seryl-[protein] + ATP = O-phospho-L-seryl-[protein] + ADP + H(+). It carries out the reaction L-threonyl-[protein] + ATP = O-phospho-L-threonyl-[protein] + ADP + H(+). Its function is as follows. Protein kinase which phosphorylates ESR1 (in vitro) and protects it against proteasomal degradation. May also regulate ESR1 levels indirectly via a PKC-AKT-FOXO3 pathway where it decreases the activity of PKC and the phosphorylation of AKT, thereby increasing binding of transcriptional activator FOXO3 to the ESR1 promoter and increasing ESR1 transcription. Involved in endocytic trafficking of N-methyl-D-aspartate receptors (NMDAR) in neurons. The sequence is that of Serine/threonine-protein kinase LMTK3 (Lmtk3) from Mus musculus (Mouse).